Here is a 384-residue protein sequence, read N- to C-terminus: Omega-6 fatty acid desaturase, endoplasmic reticulum (384 aa).

The segment at 1 to 23 is disordered; it reads MGAGGRMQVSPSPKKSETDTLKR. Residues 14–23 are compositionally biased toward basic and acidic residues; the sequence is KKSETDTLKR. The next 2 helical transmembrane spans lie at 56–76 and 84–104; these read LIWDIIVASCFYYVATTYFPL and VAWPLYWACQGVVLTGVWVIA. Residues 105-109 carry the Histidine box-1 motif; that stretch reads HECGH. The helical transmembrane segment at 117 to 137 threads the bilayer; it reads WLDDTVGLIFHSFLLVPYFSW. The Histidine box-2 motif lies at 141 to 145; the sequence is HRRHH. The next 3 helical transmembrane spans lie at 180–200, 226–246, and 253–273; these read VMLTVQFTLGWPLYWAFNVSG, IYVSDAGILAVCYGLYRYAAA, and VCLYGVPLLIVNAFLVLITYL. Residues 316–320 carry the Histidine box-3 motif; it reads HVAHH.

The protein belongs to the fatty acid desaturase type 1 family.

The protein resides in the endoplasmic reticulum membrane. Its pathway is lipid metabolism; polyunsaturated fatty acid biosynthesis. ER (microsomal) omega-6 fatty acid desaturase introduces the second double bond in the biosynthesis of 18:3 fatty acids, important constituents of plant membranes. It is thought to use cytochrome b5 as an electron donor and to act on fatty acids esterified to phosphatidylcholine and, possibly, other phospholipids. This Brassica juncea (Indian mustard) protein is Omega-6 fatty acid desaturase, endoplasmic reticulum.